The sequence spans 219 residues: Probable nicotinate-nucleotide adenylyltransferase (219 aa).

The protein belongs to the NadD family.

The catalysed reaction is nicotinate beta-D-ribonucleotide + ATP + H(+) = deamido-NAD(+) + diphosphate. Its pathway is cofactor biosynthesis; NAD(+) biosynthesis; deamido-NAD(+) from nicotinate D-ribonucleotide: step 1/1. Its function is as follows. Catalyzes the reversible adenylation of nicotinate mononucleotide (NaMN) to nicotinic acid adenine dinucleotide (NaAD). This Chromohalobacter salexigens (strain ATCC BAA-138 / DSM 3043 / CIP 106854 / NCIMB 13768 / 1H11) protein is Probable nicotinate-nucleotide adenylyltransferase.